The following is a 317-amino-acid chain: Glutaminase (317 aa).

Substrate is bound by residues serine 67, asparagine 118, glutamate 162, asparagine 169, tyrosine 193, tyrosine 245, and valine 263.

The protein belongs to the glutaminase family. As to quaternary structure, homotetramer.

The enzyme catalyses L-glutamine + H2O = L-glutamate + NH4(+). In Brucella canis (strain ATCC 23365 / NCTC 10854 / RM-666), this protein is Glutaminase.